The sequence spans 276 residues: Octopine-binding periplasmic protein (276 aa).

The first 20 residues, M1 to A20, serve as a signal peptide directing secretion. A disulfide bridge links C57 with C64.

This sequence belongs to the bacterial solute-binding protein 3 family.

It is found in the periplasm. Component of the octopine active transport system probably consisting of four subunits: Q, M, P and T. The polypeptide is Octopine-binding periplasmic protein (occT) (Agrobacterium tumefaciens (strain Ach5)).